The sequence spans 369 residues: Coiled-coil domain-containing protein 149 (369 aa).

Residues 1–249 (MKENNNAEIL…AKYKQMAEAV (249 aa)) are a coiled coil.

Belongs to the CCDC149 family. As to expression, expressed in amphid and phasmid ciliated neurons, and also pharyngeal, touch receptor and motor neurons.

The protein resides in the cell projection. It is found in the cilium. The chain is Coiled-coil domain-containing protein 149 from Caenorhabditis elegans.